A 440-amino-acid chain; its full sequence is Ribulose bisphosphate carboxylase large chain (440 aa).

The residue at position 4 (Lys-4) is an N6,N6,N6-trimethyllysine. 2 residues coordinate substrate: Asn-113 and Thr-163. The active-site Proton acceptor is the Lys-165. Lys-167 is a substrate binding site. Positions 191, 193, and 194 each coordinate Mg(2+). Residue Lys-191 is modified to N6-carboxylysine. His-284 (proton acceptor) is an active-site residue. Substrate-binding residues include Arg-285, His-317, and Ser-369.

This sequence belongs to the RuBisCO large chain family. Type I subfamily. In terms of assembly, heterohexadecamer of 8 large chains and 8 small chains; disulfide-linked. The disulfide link is formed within the large subunit homodimers. The cofactor is Mg(2+). Post-translationally, the disulfide bond which can form in the large chain dimeric partners within the hexadecamer appears to be associated with oxidative stress and protein turnover.

Its subcellular location is the plastid. The protein localises to the chloroplast. It carries out the reaction 2 (2R)-3-phosphoglycerate + 2 H(+) = D-ribulose 1,5-bisphosphate + CO2 + H2O. The catalysed reaction is D-ribulose 1,5-bisphosphate + O2 = 2-phosphoglycolate + (2R)-3-phosphoglycerate + 2 H(+). Its function is as follows. RuBisCO catalyzes two reactions: the carboxylation of D-ribulose 1,5-bisphosphate, the primary event in carbon dioxide fixation, as well as the oxidative fragmentation of the pentose substrate in the photorespiration process. Both reactions occur simultaneously and in competition at the same active site. The chain is Ribulose bisphosphate carboxylase large chain from Dicksonia antarctica (Australian tree fern).